A 117-amino-acid polypeptide reads, in one-letter code: Fluoride-specific ion channel FluC 2 (117 aa).

4 helical membrane passes run 4–24, 31–51, 59–79, and 94–114; these read FLIG…GDII, KFPW…GIIT, LSMI…TFMY, and LIYI…GEFI. Na(+)-binding residues include G69 and T72.

The protein belongs to the fluoride channel Fluc/FEX (TC 1.A.43) family.

Its subcellular location is the cell membrane. The enzyme catalyses fluoride(in) = fluoride(out). With respect to regulation, na(+) is not transported, but it plays an essential structural role and its presence is essential for fluoride channel function. Functionally, fluoride-specific ion channel. Important for reducing fluoride concentration in the cell, thus reducing its toxicity. The protein is Fluoride-specific ion channel FluC 2 of Clostridium acetobutylicum (strain ATCC 824 / DSM 792 / JCM 1419 / IAM 19013 / LMG 5710 / NBRC 13948 / NRRL B-527 / VKM B-1787 / 2291 / W).